Consider the following 221-residue polypeptide: Uracil-DNA glycosylase (221 aa).

Aspartate 64 (proton acceptor) is an active-site residue.

It belongs to the uracil-DNA glycosylase (UDG) superfamily. UNG family.

It localises to the cytoplasm. The enzyme catalyses Hydrolyzes single-stranded DNA or mismatched double-stranded DNA and polynucleotides, releasing free uracil.. Functionally, excises uracil residues from the DNA which can arise as a result of misincorporation of dUMP residues by DNA polymerase or due to deamination of cytosine. This Mycoplasmopsis pulmonis (strain UAB CTIP) (Mycoplasma pulmonis) protein is Uracil-DNA glycosylase.